The chain runs to 225 residues: Ribonuclease 3 (225 aa).

Residues 5–127 (IDKLERKIGY…IIGAVYLDSD (123 aa)) form the RNase III domain. Glu-40 contributes to the Mg(2+) binding site. Asp-44 is an active-site residue. Positions 113 and 116 each coordinate Mg(2+). Glu-116 is an active-site residue. Positions 154-224 (DPKTRLQEFL…AETALEQLSN (71 aa)) constitute a DRBM domain.

Belongs to the ribonuclease III family. As to quaternary structure, homodimer. The cofactor is Mg(2+).

It localises to the cytoplasm. The catalysed reaction is Endonucleolytic cleavage to 5'-phosphomonoester.. Functionally, digests double-stranded RNA. Involved in the processing of primary rRNA transcript to yield the immediate precursors to the large and small rRNAs (23S and 16S). Processes some mRNAs, and tRNAs when they are encoded in the rRNA operon. Processes pre-crRNA and tracrRNA of type II CRISPR loci if present in the organism. This chain is Ribonuclease 3, found in Vibrio atlanticus (strain LGP32) (Vibrio splendidus (strain Mel32)).